The primary structure comprises 100 residues: Small ribosomal subunit protein uS14 (100 aa).

It belongs to the universal ribosomal protein uS14 family. As to quaternary structure, part of the 30S ribosomal subunit. Contacts proteins S3 and S10.

In terms of biological role, binds 16S rRNA, required for the assembly of 30S particles and may also be responsible for determining the conformation of the 16S rRNA at the A site. The polypeptide is Small ribosomal subunit protein uS14 (Prochlorococcus marinus (strain MIT 9303)).